We begin with the raw amino-acid sequence, 159 residues long: S-ribosylhomocysteine lyase 1 (159 aa).

Residues H54, H58, and C124 each coordinate Fe cation.

The protein belongs to the LuxS family. In terms of assembly, homodimer. Fe cation is required as a cofactor.

The enzyme catalyses S-(5-deoxy-D-ribos-5-yl)-L-homocysteine = (S)-4,5-dihydroxypentane-2,3-dione + L-homocysteine. In terms of biological role, involved in the synthesis of autoinducer 2 (AI-2) which is secreted by bacteria and is used to communicate both the cell density and the metabolic potential of the environment. The regulation of gene expression in response to changes in cell density is called quorum sensing. Catalyzes the transformation of S-ribosylhomocysteine (RHC) to homocysteine (HC) and 4,5-dihydroxy-2,3-pentadione (DPD). This Lactobacillus delbrueckii subsp. bulgaricus (strain ATCC BAA-365 / Lb-18) protein is S-ribosylhomocysteine lyase 1.